The primary structure comprises 358 residues: Trace amine-associated receptor 7h (358 aa).

At 1–47 (MATDDESFPWDQDSILSRDLLSALSPQLCYENLNRSCVRSPYSPGPR) the chain is on the extracellular side. The N-linked (GlcNAc...) asparagine glycan is linked to Asn34. 2 disulfide bridges follow: Cys37-Cys201 and Cys120-Cys205. The helical transmembrane segment at 48 to 68 (LILYAVFGFGAVLAVCGNLLV) threads the bilayer. The Cytoplasmic segment spans residues 69–83 (MTSILHFRQLHSPAN). A helical membrane pass occupies residues 84–104 (FLVASLACADLLVGLTVMPFS). Topologically, residues 105 to 125 (MVRSVEGCWYFGDSYCKLHTS) are extracellular. The helical transmembrane segment at 126–143 (FDMSFCCSSLLHLCFISV) threads the bilayer. Over 144–166 (DRYIAVSDPLIYPIRFTASVSGK) the chain is Cytoplasmic. The helical transmembrane segment at 167 to 187 (CITFSWFLSIIYGFSLIYTGA) threads the bilayer. The Extracellular portion of the chain corresponds to 188 to 217 (SEAGLKDLVSALSCVGGCQIPMNQSCVLIN). Residue Asn210 is glycosylated (N-linked (GlcNAc...) asparagine). Residues 218–238 (FLLFLVPTLVMMTVYSKIFLI) traverse the membrane as a helical segment. Residues 239 to 274 (AKQQAQNMEKMSKQTTRASDSYKDRVAKRERKAAKT) are Cytoplasmic-facing. A helical transmembrane segment spans residues 275–295 (LGIAVAAFLLSWLPYLIDSII). At 296-309 (DAFLGFITPSYVYE) the chain is on the extracellular side. A helical membrane pass occupies residues 310–333 (ILVWIVYYNSAMNPLIYAFFYPWF). Residues 334–358 (RNAIKLIVTGKILKQNSSTTNLFSE) are Cytoplasmic-facing.

It belongs to the G-protein coupled receptor 1 family.

The protein resides in the cell membrane. Its function is as follows. Olfactory receptor specific for N,N-dimethylalkylamines trace amines. Trace amine compounds are enriched in animal body fluids and act on trace amine-associated receptors (TAARs) to elicit both intraspecific and interspecific innate behaviors. Ligand-binding causes a conformation change that triggers signaling via G(s)-class of G alpha proteins (GNAL or GNAS). In Rattus norvegicus (Rat), this protein is Trace amine-associated receptor 7h.